A 423-amino-acid chain; its full sequence is AP-1 complex subunit mu-2 (423 aa).

Residues 168-421 (KNEVFIDVIE…ITQSGDYQLR (254 aa)) form the MHD domain.

Belongs to the adaptor complexes medium subunit family. Adaptor protein complex 1 (AP-1) is a heterotetramer composed of two large adaptins (gamma-type subunit AP1G1 and beta-type subunit AP1B1), a medium adaptin (mu-type subunit AP1M1 or AP1M2) and a small adaptin (sigma-type subunit AP1S1 or AP1S2 or AP1S3). Interacts with P2X4. Post-translationally, phosphorylation of membrane-bound AP1M1/AP1M2 increases its affinity for sorting signals.

The protein resides in the golgi apparatus. It localises to the cytoplasmic vesicle. Its subcellular location is the clathrin-coated vesicle membrane. Its function is as follows. Subunit of clathrin-associated adaptor protein complex 1 that plays a role in protein sorting in the trans-Golgi network (TGN) and endosomes. The AP complexes mediate the recruitment of clathrin to membranes and the recognition of sorting signals within the cytosolic tails of transmembrane cargo molecules. This chain is AP-1 complex subunit mu-2 (Ap1m2), found in Rattus norvegicus (Rat).